The sequence spans 422 residues: Gamma-glutamyl phosphate reductase (422 aa).

This sequence belongs to the gamma-glutamyl phosphate reductase family.

The protein resides in the cytoplasm. It catalyses the reaction L-glutamate 5-semialdehyde + phosphate + NADP(+) = L-glutamyl 5-phosphate + NADPH + H(+). It participates in amino-acid biosynthesis; L-proline biosynthesis; L-glutamate 5-semialdehyde from L-glutamate: step 2/2. In terms of biological role, catalyzes the NADPH-dependent reduction of L-glutamate 5-phosphate into L-glutamate 5-semialdehyde and phosphate. The product spontaneously undergoes cyclization to form 1-pyrroline-5-carboxylate. This is Gamma-glutamyl phosphate reductase from Chloroflexus aurantiacus (strain ATCC 29366 / DSM 635 / J-10-fl).